The following is a 529-amino-acid chain: Tyrosinase (529 aa).

The N-terminal stretch at 1 to 18 (MFLFAMGLLLVILQPSTG) is a signal peptide. At 19–476 (QFPRVCANTQ…YLKQAHQIWP (458 aa)) the chain is on the lumenal, melanosome side. N-linked (GlcNAc...) asparagine glycans are attached at residues Asn-86, Asn-111, and Asn-161. Residues His-180, His-202, and His-211 each coordinate Cu cation. Asn-230 and Asn-290 each carry an N-linked (GlcNAc...) asparagine glycan. A disordered region spans residues 293–313 (SEGPILRNPGNNDKSRTPRLP). Residues Asn-337 and Asn-356 are each glycosylated (N-linked (GlcNAc...) asparagine). Cu cation contacts are provided by His-363 and His-367. Residue Asn-371 is glycosylated (N-linked (GlcNAc...) asparagine). His-390 is a binding site for Cu cation. The chain crosses the membrane as a helical span at residues 477-497 (WLVGAAVIGGIITAVLSGLIL). The Cytoplasmic portion of the chain corresponds to 498–529 (ACRKKRKGTSPEIQPLLTESEDYNNVSYQSHF).

The protein belongs to the tyrosinase family. Cu(2+) serves as cofactor.

The protein resides in the melanosome membrane. Its subcellular location is the melanosome. The enzyme catalyses 2 L-dopa + O2 = 2 L-dopaquinone + 2 H2O. It carries out the reaction L-tyrosine + O2 = L-dopaquinone + H2O. Its function is as follows. This is a copper-containing oxidase that functions in the formation of pigments such as melanins and other polyphenolic compounds. Catalyzes the initial and rate limiting step in the cascade of reactions leading to melanin production from tyrosine. In addition to hydroxylating tyrosine to DOPA (3,4-dihydroxyphenylalanine), also catalyzes the oxidation of DOPA to DOPA-quinone, and possibly the oxidation of DHI (5,6-dihydroxyindole) to indole-5,6 quinone. The polypeptide is Tyrosinase (TYR) (Gallus gallus (Chicken)).